The chain runs to 196 residues: Probable thymidylate kinase (196 aa).

9-16 (GIDGSGKT) provides a ligand contact to ATP.

The protein belongs to the thymidylate kinase family.

The enzyme catalyses dTMP + ATP = dTDP + ADP. In Methanococcus aeolicus (strain ATCC BAA-1280 / DSM 17508 / OCM 812 / Nankai-3), this protein is Probable thymidylate kinase.